A 420-amino-acid chain; its full sequence is Small ribosomal subunit protein mS75 (420 aa).

Residues 1 to 11 (MYNLSRIIYRF) constitute a mitochondrion transit peptide. Disordered regions lie at residues 99–120 (RQKN…DVMS) and 390–420 (RYSP…GKQT). Polar residues predominate over residues 102–114 (NAANPSSDNTPSD). Residues 396-409 (QKRRSKRKQKRKER) are compositionally biased toward basic residues.

Component of the mitochondrial ribosome small subunit. In terms of tissue distribution, expressed at high levels in reproductive organs and, at lower levels, ubiquitously.

The protein resides in the mitochondrion. In terms of biological role, essential for fertility (male and female gametophyte functions and development). Required for the integrity of female gametic mitochondria. Modulates male gametophyte functions, including pollen tube growth and style penetration. Involved in mitochondrial-driven cell-to-cell communication in embryo sacs during female gametes maturation (including embryogenesis initiation and endosperm development), especially for reciprocal signaling between central and egg cells which regulates reciprocal development. The chain is Small ribosomal subunit protein mS75 from Arabidopsis thaliana (Mouse-ear cress).